The primary structure comprises 400 residues: Riboflavin biosynthesis protein RibBA (400 aa).

The DHBP synthase stretch occupies residues 1 to 202 (MTTFGTIEQA…IADLVMYRRR (202 aa)). D-ribulose 5-phosphate contacts are provided by residues 28-29 (RE), Asp33, 141-145 (RTGHT), and Glu165. Glu29 is a Mg(2+) binding site. His144 contributes to the Mg(2+) binding site. Residues 203–400 (TEKQVELVAE…KRDRMGHLLG (198 aa)) form a GTP cyclohydrolase II region. Residue 253–257 (RAHSE) coordinates GTP. The Zn(2+) site is built by Cys258, Cys269, and Cys271. GTP is bound by residues Gln274, 297 to 299 (EGR), and Thr319. The active-site Proton acceptor; for GTP cyclohydrolase activity is Asp331. The Nucleophile; for GTP cyclohydrolase activity role is filled by Arg333. 2 residues coordinate GTP: Thr354 and Lys359.

It in the N-terminal section; belongs to the DHBP synthase family. In the C-terminal section; belongs to the GTP cyclohydrolase II family. The cofactor is Mg(2+). Requires Mn(2+) as cofactor. Zn(2+) is required as a cofactor.

The enzyme catalyses D-ribulose 5-phosphate = (2S)-2-hydroxy-3-oxobutyl phosphate + formate + H(+). The catalysed reaction is GTP + 4 H2O = 2,5-diamino-6-hydroxy-4-(5-phosphoribosylamino)-pyrimidine + formate + 2 phosphate + 3 H(+). It functions in the pathway cofactor biosynthesis; riboflavin biosynthesis; 2-hydroxy-3-oxobutyl phosphate from D-ribulose 5-phosphate: step 1/1. The protein operates within cofactor biosynthesis; riboflavin biosynthesis; 5-amino-6-(D-ribitylamino)uracil from GTP: step 1/4. Its function is as follows. Catalyzes the conversion of D-ribulose 5-phosphate to formate and 3,4-dihydroxy-2-butanone 4-phosphate. Catalyzes the conversion of GTP to 2,5-diamino-6-ribosylamino-4(3H)-pyrimidinone 5'-phosphate (DARP), formate and pyrophosphate. In Salinispora tropica (strain ATCC BAA-916 / DSM 44818 / JCM 13857 / NBRC 105044 / CNB-440), this protein is Riboflavin biosynthesis protein RibBA.